The following is a 255-amino-acid chain: 5-oxoprolinase subunit A (255 aa).

Belongs to the LamB/PxpA family. As to quaternary structure, forms a complex composed of PxpA, PxpB and PxpC.

It catalyses the reaction 5-oxo-L-proline + ATP + 2 H2O = L-glutamate + ADP + phosphate + H(+). Its function is as follows. Catalyzes the cleavage of 5-oxoproline to form L-glutamate coupled to the hydrolysis of ATP to ADP and inorganic phosphate. This is 5-oxoprolinase subunit A from Pyrococcus horikoshii (strain ATCC 700860 / DSM 12428 / JCM 9974 / NBRC 100139 / OT-3).